The following is a 227-amino-acid chain: 6,7-dimethyl-8-ribityllumazine synthase, chloroplastic (227 aa).

The N-terminal 71 residues, 1-71 (MKSLASPPCL…LRSSFVQTAA (71 aa)), are a transit peptide targeting the chloroplast. 5-amino-6-(D-ribitylamino)uracil is bound by residues phenylalanine 94, 128–130 (SFE), and 152–154 (AVI). 157-158 (DT) lines the (2S)-2-hydroxy-3-oxobutyl phosphate pocket. Residue histidine 160 is the Proton donor of the active site. Phenylalanine 185 is a 5-amino-6-(D-ribitylamino)uracil binding site. Arginine 199 is a binding site for (2S)-2-hydroxy-3-oxobutyl phosphate.

The protein belongs to the DMRL synthase family. In terms of assembly, oligomer forming an icosahedral capsid.

The protein localises to the plastid. It is found in the chloroplast. The enzyme catalyses (2S)-2-hydroxy-3-oxobutyl phosphate + 5-amino-6-(D-ribitylamino)uracil = 6,7-dimethyl-8-(1-D-ribityl)lumazine + phosphate + 2 H2O + H(+). It functions in the pathway cofactor biosynthesis; riboflavin biosynthesis; riboflavin from 2-hydroxy-3-oxobutyl phosphate and 5-amino-6-(D-ribitylamino)uracil: step 1/2. In terms of biological role, catalyzes the formation of 6,7-dimethyl-8-ribityllumazine by condensation of 5-amino-6-(D-ribitylamino)uracil with 3,4-dihydroxy-2-butanone 4-phosphate. This is the penultimate step in the biosynthesis of riboflavin. The chain is 6,7-dimethyl-8-ribityllumazine synthase, chloroplastic from Arabidopsis thaliana (Mouse-ear cress).